The primary structure comprises 777 residues: Probable aconitate hydratase, mitochondrial (777 aa).

Residues 1–26 (MNSLLRLSHLAGPAHYRALHSSSSIW) constitute a mitochondrion transit peptide. Substrate is bound by residues glutamine 96 and 189-191 (DSH). The [4Fe-4S] cluster site is built by cysteine 382, cysteine 445, and cysteine 448. Residues arginine 471 and arginine 476 each contribute to the substrate site. The tract at residues 534–555 (YDPGEDTFQAPSGSGQVDVSPS) is disordered. Polar residues predominate over residues 542-555 (QAPSGSGQVDVSPS). Residues arginine 601 and 664–665 (SR) contribute to the substrate site.

This sequence belongs to the aconitase/IPM isomerase family. In terms of assembly, monomer. [4Fe-4S] cluster serves as cofactor.

It is found in the mitochondrion. It catalyses the reaction citrate = D-threo-isocitrate. It participates in carbohydrate metabolism; tricarboxylic acid cycle; isocitrate from oxaloacetate: step 2/2. Its function is as follows. Catalyzes the isomerization of citrate to isocitrate via cis-aconitate. The chain is Probable aconitate hydratase, mitochondrial from Caenorhabditis elegans.